The sequence spans 345 residues: 3-isopropylmalate dehydrogenase (345 aa).

Residue 76 to 87 coordinates NAD(+); sequence GPKYDNAPVRPE. Substrate is bound by residues Arg-94, Arg-104, Arg-132, and Asp-216. Positions 216, 240, and 244 each coordinate Mg(2+). 274 to 286 is a binding site for NAD(+); that stretch reads GSAPDIAGQGIAN.

Belongs to the isocitrate and isopropylmalate dehydrogenases family. LeuB type 1 subfamily. Homodimer. Mg(2+) serves as cofactor. Mn(2+) is required as a cofactor.

It localises to the cytoplasm. The catalysed reaction is (2R,3S)-3-isopropylmalate + NAD(+) = 4-methyl-2-oxopentanoate + CO2 + NADH. Its pathway is amino-acid biosynthesis; L-leucine biosynthesis; L-leucine from 3-methyl-2-oxobutanoate: step 3/4. In terms of biological role, catalyzes the oxidation of 3-carboxy-2-hydroxy-4-methylpentanoate (3-isopropylmalate) to 3-carboxy-4-methyl-2-oxopentanoate. The product decarboxylates to 4-methyl-2 oxopentanoate. This chain is 3-isopropylmalate dehydrogenase, found in Streptococcus thermophilus (strain CNRZ 1066).